Consider the following 101-residue polypeptide: Small ribosomal subunit protein uS14 (101 aa).

It belongs to the universal ribosomal protein uS14 family. In terms of assembly, part of the 30S ribosomal subunit. Contacts proteins S3 and S10.

In terms of biological role, binds 16S rRNA, required for the assembly of 30S particles and may also be responsible for determining the conformation of the 16S rRNA at the A site. The polypeptide is Small ribosomal subunit protein uS14 (Salmonella paratyphi A (strain ATCC 9150 / SARB42)).